The primary structure comprises 426 residues: Phosphoribosylamine--glycine ligase (426 aa).

Residues 107–313 (KDFMQKYGVK…FLNVINSALN (207 aa)) form the ATP-grasp domain. 133–194 (LDKISYPVVI…EEFLDGVEIS (62 aa)) contributes to the ATP binding site. Residues Glu283 and Asn285 each coordinate Mg(2+).

This sequence belongs to the GARS family. It depends on Mg(2+) as a cofactor. Mn(2+) serves as cofactor.

It catalyses the reaction 5-phospho-beta-D-ribosylamine + glycine + ATP = N(1)-(5-phospho-beta-D-ribosyl)glycinamide + ADP + phosphate + H(+). It functions in the pathway purine metabolism; IMP biosynthesis via de novo pathway; N(1)-(5-phospho-D-ribosyl)glycinamide from 5-phospho-alpha-D-ribose 1-diphosphate: step 2/2. This is Phosphoribosylamine--glycine ligase from Fusobacterium nucleatum subsp. nucleatum (strain ATCC 25586 / DSM 15643 / BCRC 10681 / CIP 101130 / JCM 8532 / KCTC 2640 / LMG 13131 / VPI 4355).